The following is a 569-amino-acid chain: 63 kDa chaperonin, mitochondrial (569 aa).

Residues 1 to 29 (MFKMYRSPHITRNSFKYLKATNINSCRFY) constitute a mitochondrion transit peptide.

The protein belongs to the chaperonin (HSP60) family. As to quaternary structure, forms a single seven-member ring complex, in tight association with the p60 protein. In terms of tissue distribution, testis.

It localises to the mitochondrion. In terms of biological role, implicated in mitochondrial protein import and macromolecular assembly. May facilitate the correct folding of imported proteins. May also prevent misfolding and promote the refolding and proper assembly of unfolded polypeptides generated under stress conditions in the mitochondrial matrix. The sequence is that of 63 kDa chaperonin, mitochondrial from Heliothis virescens (Tobacco budworm moth).